The chain runs to 825 residues: Interleukin-4 receptor subunit alpha (825 aa).

Residues 1 to 25 (MGWLCSGLLFPVSCLVLLQVASSGN) form the signal peptide. The Extracellular segment spans residues 26-232 (MKVLQEPTCV…NSYREPFEQH (207 aa)). A disulfide bridge links cysteine 34 with cysteine 44. Asparagine 53 carries an N-linked (GlcNAc...) asparagine glycan. Cysteine 74 and cysteine 86 form a disulfide bridge. N-linked (GlcNAc...) asparagine glycosylation is found at asparagine 98, asparagine 128, asparagine 134, asparagine 176, and asparagine 209. The 100-residue stretch at 125 to 224 (APGNLTVHTN…WSPSTKWHNS (100 aa)) folds into the Fibronectin type-III domain. Residues 212–216 (WSEWS) carry the WSXWS motif motif. The helical transmembrane segment at 233–256 (LLLGVSVSCIVILAVCLLCYVSIT) threads the bilayer. The Cytoplasmic segment spans residues 257–825 (KIKKEWWDQI…SVGPTYMRVS (569 aa)). Positions 262-270 (WWDQIPNPA) match the Box 1 motif motif. Disordered stretches follow at residues 373 to 397 (EEEEVEEEKGSFCASPESSRDDFQE) and 433 to 485 (LPPS…LTCT). The interval 437–557 (GSTSAHMPWD…ETWEQILRRN (121 aa)) is required for IRS1 activation and IL4-induced cell growth. Positions 475-485 (PTQSPDNLTCT) are enriched in polar residues. A phosphotyrosine mark is found at tyrosine 497, tyrosine 575, tyrosine 603, and tyrosine 631. Positions 558-657 (VLQHGAAAAP…VPVPLFTFGL (100 aa)) are required for IL4-induced gene expression. Positions 651 to 703 (PLFTFGLDREPPRSPQSSHLPSSSPEHLGLEPGEKVEDMPKPPLPQEQATDPL) are disordered. Over residues 665–677 (PQSSHLPSSSPEH) the composition is skewed to low complexity. The span at 678–690 (LGLEPGEKVEDMP) shows a compositional bias: basic and acidic residues. The short motif at 711-716 (IVYSAL) is the ITIM motif element. The segment at 782 to 809 (PSGISEKSKSSSSFHPAPGNAQSSSQTP) is disordered.

It belongs to the type I cytokine receptor family. Type 4 subfamily. The functional IL4 receptor is formed by initial binding of IL4 to IL4R. Subsequent recruitment to the complex of the common gamma chain, in immune cells, creates a type I receptor and, in non-immune cells, of IL13RA1 forms a type II receptor. IL4R can also interact with the IL13/IL13RA1 complex to form a similar type II receptor. Interacts with PIK3C3. Interacts with the SH2-containing phosphatases, PTPN6/SHIP1, PTPN11/SHIP2 and INPP5D/SHIP. Interacts with JAK1 through a Box 1-containing region; inhibited by SOCS5. Interacts with SOCS5; inhibits IL4 signaling. Interacts with JAK3. Interacts with CLM1. Interacts with IL13RA2. Post-translationally, on IL4 binding, phosphorylated on C-terminal tyrosine residues. Phosphorylation on any one of tyrosine residues, Tyr-575, Tyr-603 or Tyr-631, is required for STAT6-induced gene induction. The soluble form (sIL4R/IL4BP) can also be produced by proteolytic cleavage at the cell surface (shedding) by a metalloproteinase. Isoform 1 and isoform 2 are highly expressed in activated T-cells.

The protein resides in the cell membrane. The protein localises to the secreted. Its function is as follows. Receptor for both interleukin 4 and interleukin 13. Couples to the JAK1/2/3-STAT6 pathway. The IL4 response is involved in promoting Th2 differentiation. The IL4/IL13 responses are involved in regulating IgE production and, chemokine and mucus production at sites of allergic inflammation. In certain cell types, can signal through activation of insulin receptor substrates, IRS1/IRS2. Soluble IL4R (sIL4R) inhibits IL4-mediated cell proliferation and IL5 up-regulation by T-cells. The protein is Interleukin-4 receptor subunit alpha (IL4R) of Homo sapiens (Human).